Consider the following 355-residue polypeptide: Erythronate-4-phosphate dehydrogenase (355 aa).

The substrate site is built by S45 and T66. An NAD(+)-binding site is contributed by D146. R206 is a catalytic residue. D229 contacts NAD(+). E234 is an active-site residue. H251 acts as the Proton donor in catalysis. Residue G254 coordinates NAD(+). Y255 is a substrate binding site.

It belongs to the D-isomer specific 2-hydroxyacid dehydrogenase family. PdxB subfamily. In terms of assembly, homodimer.

It localises to the cytoplasm. It catalyses the reaction 4-phospho-D-erythronate + NAD(+) = (R)-3-hydroxy-2-oxo-4-phosphooxybutanoate + NADH + H(+). It functions in the pathway cofactor biosynthesis; pyridoxine 5'-phosphate biosynthesis; pyridoxine 5'-phosphate from D-erythrose 4-phosphate: step 2/5. Its function is as follows. Catalyzes the oxidation of erythronate-4-phosphate to 3-hydroxy-2-oxo-4-phosphonooxybutanoate. In Acinetobacter baumannii (strain SDF), this protein is Erythronate-4-phosphate dehydrogenase.